A 211-amino-acid polypeptide reads, in one-letter code: Ion-translocating oxidoreductase complex subunit G (211 aa).

Residues 9–29 (GLTLAIFACATTGLVAMTQYL) traverse the membrane as a helical segment. Thr175 carries the FMN phosphoryl threonine modification.

The protein belongs to the RnfG family. As to quaternary structure, the complex is composed of six subunits: RnfA, RnfB, RnfC, RnfD, RnfE and RnfG. The cofactor is FMN.

The protein localises to the cell inner membrane. Functionally, part of a membrane-bound complex that couples electron transfer with translocation of ions across the membrane. In Vibrio vulnificus (strain YJ016), this protein is Ion-translocating oxidoreductase complex subunit G.